The sequence spans 289 residues: Shikimate dehydrogenase (NADP(+)) (289 aa).

Residues 19–21 and Thr-66 contribute to the shikimate site; that span reads SMS. The active-site Proton acceptor is the Lys-70. 2 residues coordinate shikimate: Asn-91 and Asp-106. Residues 131–135, 155–160, and Leu-229 contribute to the NADP(+) site; these read GAGGA and NRTLKK. Residue Tyr-231 participates in shikimate binding. Residue Gly-252 participates in NADP(+) binding.

Belongs to the shikimate dehydrogenase family. Homodimer.

The catalysed reaction is shikimate + NADP(+) = 3-dehydroshikimate + NADPH + H(+). The protein operates within metabolic intermediate biosynthesis; chorismate biosynthesis; chorismate from D-erythrose 4-phosphate and phosphoenolpyruvate: step 4/7. Functionally, involved in the biosynthesis of the chorismate, which leads to the biosynthesis of aromatic amino acids. Catalyzes the reversible NADPH linked reduction of 3-dehydroshikimate (DHSA) to yield shikimate (SA). The protein is Shikimate dehydrogenase (NADP(+)) of Halothermothrix orenii (strain H 168 / OCM 544 / DSM 9562).